The chain runs to 274 residues: MRKVAIYGKGGIGKSTTTQNTVAGLAEMGKKVMVIGCDPKADSTRLLLGGLQQKTVLDTLREEGEEVELEDIIKEGYRNTRCTESGGPEPGVGCAGRGIITSVNLLEQLGAFDDEWNLDYVFYDVLGDVVCGGFAMPIRDGKAEEIYIVCSGEMMAMYAANNICKGILKYADAGGVRLGGLICNSRKVDNEREMIEELARRIGTQMIHFVPRDNFVQRAEINRKTVIDYDPTHGQADEYRALAQKINDNKMFVIPKPLEIEELESLLIEFGIAN.

8–15 (GKGGIGKS) provides a ligand contact to ATP. Cys94 contributes to the [4Fe-4S] cluster binding site. Position 97 is an ADP-ribosylarginine; by dinitrogenase reductase ADP-ribosyltransferase (Arg97). Cys131 lines the [4Fe-4S] cluster pocket.

It belongs to the NifH/BchL/ChlL family. Homodimer. [4Fe-4S] cluster serves as cofactor. The reversible ADP-ribosylation of Arg-97 inactivates the nitrogenase reductase and regulates nitrogenase activity.

The enzyme catalyses N2 + 8 reduced [2Fe-2S]-[ferredoxin] + 16 ATP + 16 H2O = H2 + 8 oxidized [2Fe-2S]-[ferredoxin] + 2 NH4(+) + 16 ADP + 16 phosphate + 6 H(+). In terms of biological role, the key enzymatic reactions in nitrogen fixation are catalyzed by the nitrogenase complex, which has 2 components: the iron protein and the molybdenum-iron protein. The chain is Nitrogenase iron protein from Chlorobium chlorochromatii (strain CaD3).